Here is a 272-residue protein sequence, read N- to C-terminus: Dioscorin DB3L (272 aa).

The signal sequence occupies residues 1 to 25; the sequence is MSSSTLFHLFLLSSLLFSCLSNARP. Residues 28 to 263 enclose the Alpha-carbonic anhydrase domain; that stretch reads DDFSYIEGSP…LKFRTIFFYP (236 aa). The cysteines at positions 53 and 213 are disulfide-linked.

Belongs to the alpha-class carbonic anhydrase family. As to quaternary structure, homodimer; disulfide-linked. Post-translationally, not glycosylated. Expressed in tuber (at protein level).

Its activity is regulated as follows. Loss of hemagglutinating activity by EDTA treatment. The activity is fully recovered by the addition of 5 mM Ca(2+) ions, but not with Mg(2+) and Mn 2(+). Hemagglutination activity is inhibited by maltose and its derivatives, with maltopentaose and maltohexaose being the best inhibitors followed by maltose and iso maltose. Not inhibited by glycoproteins. Its function is as follows. Maltose-binding lectin. No affinity is detected toward glucose. Has hemagglutinating activity against rabbit erythrocytes at 3.9 ug/ml. No carbonate dehydratase or trypsin inhibitor activity detected by measuring the hydrolysis of 4-nitrophenyl acetate or the inhibition of bovine trypsin-catalyzed hydrolysis of N-benzoyl-L-arginine ethyl ester, respectively. This is Dioscorin DB3L from Dioscorea polystachya (Chinese yam).